Reading from the N-terminus, the 140-residue chain is Large-conductance mechanosensitive channel 3 (140 aa).

A run of 3 helical transmembrane segments spans residues 8–28 (FISK…AAFG), 30–50 (IVTS…FGGL), and 81–101 (GSFI…FLMV).

Belongs to the MscL family. In terms of assembly, homopentamer.

Its subcellular location is the cell inner membrane. In terms of biological role, channel that opens in response to stretch forces in the membrane lipid bilayer. May participate in the regulation of osmotic pressure changes within the cell. This is Large-conductance mechanosensitive channel 3 from Mesorhizobium japonicum (strain LMG 29417 / CECT 9101 / MAFF 303099) (Mesorhizobium loti (strain MAFF 303099)).